A 574-amino-acid chain; its full sequence is Proline--tRNA ligase (574 aa).

This sequence belongs to the class-II aminoacyl-tRNA synthetase family. ProS type 1 subfamily. Homodimer.

It localises to the cytoplasm. It carries out the reaction tRNA(Pro) + L-proline + ATP = L-prolyl-tRNA(Pro) + AMP + diphosphate. In terms of biological role, catalyzes the attachment of proline to tRNA(Pro) in a two-step reaction: proline is first activated by ATP to form Pro-AMP and then transferred to the acceptor end of tRNA(Pro). As ProRS can inadvertently accommodate and process non-cognate amino acids such as alanine and cysteine, to avoid such errors it has two additional distinct editing activities against alanine. One activity is designated as 'pretransfer' editing and involves the tRNA(Pro)-independent hydrolysis of activated Ala-AMP. The other activity is designated 'posttransfer' editing and involves deacylation of mischarged Ala-tRNA(Pro). The misacylated Cys-tRNA(Pro) is not edited by ProRS. The protein is Proline--tRNA ligase of Hahella chejuensis (strain KCTC 2396).